We begin with the raw amino-acid sequence, 430 residues long: Dihydrofolate synthase/folylpolyglutamate synthase (430 aa).

51–54 (GKGS) contacts ATP. Residue Ser75 participates in Mg(2+) binding. A 7,8-dihydropteroate-binding site is contributed by 114-117 (TEYG). Glu145 contributes to the Mg(2+) binding site. 152 to 154 (FDS) serves as a coordination point for 7,8-dihydropteroate. His172 is a binding site for Mg(2+). ATP-binding residues include Gln263, Arg302, and Asp315.

The protein belongs to the folylpolyglutamate synthase family. As to quaternary structure, monomer. Mg(2+) is required as a cofactor.

The enzyme catalyses 7,8-dihydropteroate + L-glutamate + ATP = 7,8-dihydrofolate + ADP + phosphate + H(+). The catalysed reaction is (6S)-5,6,7,8-tetrahydrofolyl-(gamma-L-Glu)(n) + L-glutamate + ATP = (6S)-5,6,7,8-tetrahydrofolyl-(gamma-L-Glu)(n+1) + ADP + phosphate + H(+). It functions in the pathway cofactor biosynthesis; tetrahydrofolate biosynthesis; 7,8-dihydrofolate from 2-amino-4-hydroxy-6-hydroxymethyl-7,8-dihydropteridine diphosphate and 4-aminobenzoate: step 2/2. It participates in cofactor biosynthesis; tetrahydrofolylpolyglutamate biosynthesis. Functions in two distinct reactions of the de novo folate biosynthetic pathway. Catalyzes the addition of a glutamate residue to dihydropteroate (7,8-dihydropteroate or H2Pte) to form dihydrofolate (7,8-dihydrofolate monoglutamate or H2Pte-Glu). Also catalyzes successive additions of L-glutamate to tetrahydrofolate, leading to folylpolyglutamate derivatives. In Bacillus subtilis (strain 168), this protein is Dihydrofolate synthase/folylpolyglutamate synthase (folC).